Consider the following 463-residue polypeptide: Hexose-6-phosphate:phosphate antiporter (463 aa).

At 1 to 24 the chain is on the cytoplasmic side; that stretch reads MLAFLNQVRKPTLDLPLDVRRKMW. A helical transmembrane segment spans residues 25-45; the sequence is FKPFMQSYLVVFIGYLTMYLI. Over 46 to 60 the chain is Periplasmic; the sequence is RKNFNIAQNDMISTY. A helical membrane pass occupies residues 61-81; it reads GLSMTELGMIGLGFSITYGVG. Over 82–96 the chain is Cytoplasmic; the sequence is KTLVSYYADGKNTKQ. A helical transmembrane segment spans residues 97–117; that stretch reads FLPFMLILSAICMLGFSASMG. Over 118–122 the chain is Periplasmic; the sequence is AGSTS. A helical transmembrane segment spans residues 123–143; it reads LFLMIAFYALSGFFQSTGGSC. Residues 144-159 are Cytoplasmic-facing; that stretch reads SYSTITKWTPRRKRGT. The chain crosses the membrane as a helical span at residues 160–180; that stretch reads FLGFWNISHNLGGAGAAGVAL. Residues 181-189 lie on the Periplasmic side of the membrane; it reads FGANYLFDG. A helical membrane pass occupies residues 190–210; sequence HVIGMFIFPSIIALIVGFIGL. Residues 211 to 259 are Cytoplasmic-facing; that stretch reads RFGSDSPESYGLGKAEELFGEEISEEDKETEENEMTKWQIFVEYVLKNK. The helical transmembrane segment at 260–280 threads the bilayer; the sequence is VIWLLCFSNIFLYVVRIGIDQ. Over 281 to 297 the chain is Periplasmic; it reads WSTVYAFQELKLSKEVA. Residues 298–318 form a helical membrane-spanning segment; it reads IQGFTLFEVGALVGTLLWGWL. The Cytoplasmic segment spans residues 319 to 326; the sequence is SDLANGRR. Residues 327-347 form a helical membrane-spanning segment; it reads ALVACVALALIIATLGVYQHA. The Periplasmic segment spans residues 348 to 357; it reads SNQYVYLASL. A helical membrane pass occupies residues 358–378; sequence FALGFLVFGPQLLIGVAAVGF. Residues 379–382 are Cytoplasmic-facing; that stretch reads VPKK. A helical transmembrane segment spans residues 383 to 403; that stretch reads AIGAADGIKGTFAYLIGDSFA. Residues 404–425 lie on the Periplasmic side of the membrane; sequence KLGLGMIADGTPVFGLTGWAGT. Residues 426 to 446 form a helical membrane-spanning segment; it reads FAALDAAAIGCICLMAMVAVM. The Cytoplasmic portion of the chain corresponds to 447-463; the sequence is EERKIRREKKIQQVNIA.

This sequence belongs to the major facilitator superfamily. Organophosphate:Pi antiporter (OPA) (TC 2.A.1.4) family.

It is found in the cell inner membrane. Mediates the exchange of external hexose 6-phosphate and internal inorganic phosphate. This is Hexose-6-phosphate:phosphate antiporter (uhpT) from Salmonella typhimurium (strain LT2 / SGSC1412 / ATCC 700720).